The following is a 432-amino-acid chain: Alcohol acyltransferase 9 (432 aa).

Residues His156 and Asp379 each act as proton acceptor in the active site.

This sequence belongs to the plant acyltransferase family. As to expression, expressed in fruit.

It catalyses the reaction 2-(methylsulfanyl)acetyl-CoA + butan-1-ol = butyl 2-(methylsulfanyl)acetate + CoA. The enzyme catalyses ethanol + acetyl-CoA = ethyl acetate + CoA. It carries out the reaction butan-1-ol + acetyl-CoA = butyl acetate + CoA. The catalysed reaction is butan-1-ol + propanoyl-CoA = butyl propanoate + CoA. In terms of biological role, involved in the biosynthesis of volatile esters which confer kiwifruit flavor. Alcohol acyl transferase that can use a wide range of alcohols as substrate to produce esters. Exhibits acetyl-CoA:alcohol O-acyltransferase activity. The chain is Alcohol acyltransferase 9 from Actinidia deliciosa (Kiwi).